A 209-amino-acid chain; its full sequence is Ribosomal RNA large subunit methyltransferase E (209 aa).

S-adenosyl-L-methionine is bound by residues G63, W65, D83, D99, and D124. The active-site Proton acceptor is K164.

This sequence belongs to the class I-like SAM-binding methyltransferase superfamily. RNA methyltransferase RlmE family.

It localises to the cytoplasm. The enzyme catalyses uridine(2552) in 23S rRNA + S-adenosyl-L-methionine = 2'-O-methyluridine(2552) in 23S rRNA + S-adenosyl-L-homocysteine + H(+). In terms of biological role, specifically methylates the uridine in position 2552 of 23S rRNA at the 2'-O position of the ribose in the fully assembled 50S ribosomal subunit. This chain is Ribosomal RNA large subunit methyltransferase E, found in Shewanella sp. (strain MR-7).